A 133-amino-acid polypeptide reads, in one-letter code: Phosphoribosyl-AMP cyclohydrolase (133 aa).

D77 is a Mg(2+) binding site. A Zn(2+)-binding site is contributed by C78. Residues D79 and D81 each contribute to the Mg(2+) site. Zn(2+) is bound by residues C95 and C102.

It belongs to the PRA-CH family. Homodimer. Mg(2+) serves as cofactor. It depends on Zn(2+) as a cofactor.

It localises to the cytoplasm. It carries out the reaction 1-(5-phospho-beta-D-ribosyl)-5'-AMP + H2O = 1-(5-phospho-beta-D-ribosyl)-5-[(5-phospho-beta-D-ribosylamino)methylideneamino]imidazole-4-carboxamide. It participates in amino-acid biosynthesis; L-histidine biosynthesis; L-histidine from 5-phospho-alpha-D-ribose 1-diphosphate: step 3/9. Catalyzes the hydrolysis of the adenine ring of phosphoribosyl-AMP. This Azotobacter vinelandii (strain DJ / ATCC BAA-1303) protein is Phosphoribosyl-AMP cyclohydrolase.